Reading from the N-terminus, the 364-residue chain is Probable 7-methylxanthine methyltransferase 5 (364 aa).

Position 19 (Tyr19) interacts with S-adenosyl-L-homocysteine. Residue Thr26 coordinates theobromine. S-adenosyl-L-homocysteine is bound by residues Cys64, Gln69, Asp101, Leu102, Ser134, and Phe135. 3 residues coordinate theobromine: Tyr152, His155, and Trp156. Residues Asn172, Asp258, Phe260, and Asn261 each contribute to the Mg(2+) site. Position 314 (Phe314) interacts with theobromine.

It belongs to the methyltransferase superfamily. Type-7 methyltransferase family. Mg(2+) serves as cofactor.

The enzyme catalyses 7-methylxanthine + S-adenosyl-L-methionine = theobromine + S-adenosyl-L-homocysteine + H(+). Its pathway is alkaloid biosynthesis. In terms of biological role, involved in the biosynthesis of theobromine. The polypeptide is Probable 7-methylxanthine methyltransferase 5 (Theobroma cacao (Cacao)).